The chain runs to 367 residues: 5-amino-6-(D-ribitylamino)uracil--L-tyrosine 4-hydroxyphenyl transferase (367 aa).

Residues 56–290 (VTYVRNQNIN…MFAVARLFLD (235 aa)) form the Radical SAM core domain. 3 residues coordinate [4Fe-4S] cluster: cysteine 70, cysteine 74, and cysteine 77.

The protein belongs to the radical SAM superfamily. CofH family. As to quaternary structure, consists of two subunits, CofG and CofH. The cofactor is [4Fe-4S] cluster.

It catalyses the reaction 5-amino-6-(D-ribitylamino)uracil + L-tyrosine + S-adenosyl-L-methionine = 5-amino-5-(4-hydroxybenzyl)-6-(D-ribitylimino)-5,6-dihydrouracil + 2-iminoacetate + 5'-deoxyadenosine + L-methionine + H(+). It functions in the pathway cofactor biosynthesis; coenzyme F0 biosynthesis. Functionally, catalyzes the radical-mediated synthesis of 5-amino-5-(4-hydroxybenzyl)-6-(D-ribitylimino)-5,6-dihydrouracil from 5-amino-6-(D-ribitylamino)uracil and L-tyrosine. This is 5-amino-6-(D-ribitylamino)uracil--L-tyrosine 4-hydroxyphenyl transferase from Methanoculleus marisnigri (strain ATCC 35101 / DSM 1498 / JR1).